Reading from the N-terminus, the 596-residue chain is Probable lysosomal cobalamin transporter (596 aa).

The next 10 membrane-spanning stretches (helical) occupy residues 7-27 (AFIW…AAIF), 46-66 (IITL…IALV), 95-115 (IVYY…IPFT), 145-165 (TLFF…APVA), 196-216 (LLIS…LALL), 313-333 (LVGG…MLIT), 350-370 (ILGS…SSIV), 376-396 (VLMA…IAVI), 420-440 (MATV…AMII), and 507-527 (FFGA…LIVF). Residues 566–596 (WQDIRGKAKNQTPSRGAAGRGIRGDDDHDDD) are disordered. The segment covering 587 to 596 (IRGDDDHDDD) has biased composition (basic and acidic residues).

The protein belongs to the LIMR family. LMBRD1 subfamily.

It localises to the lysosome membrane. Its function is as follows. Probable lysosomal cobalamin transporter. Required to export cobalamin from lysosomes allowing its conversion to cofactors. This is Probable lysosomal cobalamin transporter from Sclerotinia sclerotiorum (strain ATCC 18683 / 1980 / Ss-1) (White mold).